Here is a 348-residue protein sequence, read N- to C-terminus: Alcohol dehydrogenase 1 (348 aa).

7 residues coordinate Zn(2+): C44, H67, C98, C101, C104, C112, and C154. NAD(+)-binding positions include 178 to 184 (GAGGGLG), D202, K207, 269 to 271 (VGL), and R341.

Belongs to the zinc-containing alcohol dehydrogenase family. Homotetramer. Requires Zn(2+) as cofactor.

It localises to the cytoplasm. The catalysed reaction is a primary alcohol + NAD(+) = an aldehyde + NADH + H(+). It carries out the reaction a secondary alcohol + NAD(+) = a ketone + NADH + H(+). Converts ethanol to acetaldehyde and plays a major role in xylose fermentation. In Scheffersomyces stipitis (strain ATCC 58785 / CBS 6054 / NBRC 10063 / NRRL Y-11545) (Yeast), this protein is Alcohol dehydrogenase 1 (ADH1).